The sequence spans 101 residues: Protein mes1 (101 aa).

Basic and acidic residues predominate over residues 1–19 (MVNTDNKENEPPNMEKAHM). The disordered stretch occupies residues 1-101 (MVNTDNKENE…RSPNPLLSMR (101 aa)).

As to quaternary structure, interacts with slp1.

Its subcellular location is the cytoplasm. It localises to the nucleus. In terms of biological role, specifically required for meiosis II (MII). Binds to slp1, an activator of the anapahase promoting complex/cyclcosome (APC/C), and counteracts its function in promoting proteolysis of cdc13. By suppressing the degradation of cdc13 at anaphase I this protein may help maintain a sufficient level of cdc2 kinase activity to complete MII. The sequence is that of Protein mes1 (mes1) from Schizosaccharomyces pombe (strain 972 / ATCC 24843) (Fission yeast).